The following is a 210-amino-acid chain: dITP/XTP pyrophosphatase (210 aa).

A substrate-binding site is contributed by 13-18; the sequence is THNPGK. Residues Asp-45 and Asp-74 each contribute to the Mg(2+) site. The active-site Proton acceptor is Asp-74. Substrate is bound by residues Ser-75, 160 to 163, Lys-183, and 195 to 196; these read FGYD and HR.

The protein belongs to the HAM1 NTPase family. In terms of assembly, homodimer. Mg(2+) serves as cofactor.

It catalyses the reaction XTP + H2O = XMP + diphosphate + H(+). It carries out the reaction dITP + H2O = dIMP + diphosphate + H(+). The enzyme catalyses ITP + H2O = IMP + diphosphate + H(+). In terms of biological role, pyrophosphatase that catalyzes the hydrolysis of nucleoside triphosphates to their monophosphate derivatives, with a high preference for the non-canonical purine nucleotides XTP (xanthosine triphosphate), dITP (deoxyinosine triphosphate) and ITP. Seems to function as a house-cleaning enzyme that removes non-canonical purine nucleotides from the nucleotide pool, thus preventing their incorporation into DNA/RNA and avoiding chromosomal lesions. This is dITP/XTP pyrophosphatase from Rhodopseudomonas palustris (strain ATCC BAA-98 / CGA009).